The sequence spans 416 residues: Serine hydroxymethyltransferase (416 aa).

(6S)-5,6,7,8-tetrahydrofolate is bound by residues L117 and G121–L123. N6-(pyridoxal phosphate)lysine is present on K226.

Belongs to the SHMT family. In terms of assembly, homodimer. It depends on pyridoxal 5'-phosphate as a cofactor.

It localises to the cytoplasm. It carries out the reaction (6R)-5,10-methylene-5,6,7,8-tetrahydrofolate + glycine + H2O = (6S)-5,6,7,8-tetrahydrofolate + L-serine. It participates in one-carbon metabolism; tetrahydrofolate interconversion. It functions in the pathway amino-acid biosynthesis; glycine biosynthesis; glycine from L-serine: step 1/1. Catalyzes the reversible interconversion of serine and glycine with tetrahydrofolate (THF) serving as the one-carbon carrier. This reaction serves as the major source of one-carbon groups required for the biosynthesis of purines, thymidylate, methionine, and other important biomolecules. Also exhibits THF-independent aldolase activity toward beta-hydroxyamino acids, producing glycine and aldehydes, via a retro-aldol mechanism. The polypeptide is Serine hydroxymethyltransferase (Leptospira biflexa serovar Patoc (strain Patoc 1 / Ames)).